A 295-amino-acid polypeptide reads, in one-letter code: Bifunctional protein FolD (295 aa).

NADP(+) is bound by residues G166 to S168, S191, and I232.

It belongs to the tetrahydrofolate dehydrogenase/cyclohydrolase family. In terms of assembly, homodimer.

It catalyses the reaction (6R)-5,10-methylene-5,6,7,8-tetrahydrofolate + NADP(+) = (6R)-5,10-methenyltetrahydrofolate + NADPH. The enzyme catalyses (6R)-5,10-methenyltetrahydrofolate + H2O = (6R)-10-formyltetrahydrofolate + H(+). The protein operates within one-carbon metabolism; tetrahydrofolate interconversion. In terms of biological role, catalyzes the oxidation of 5,10-methylenetetrahydrofolate to 5,10-methenyltetrahydrofolate and then the hydrolysis of 5,10-methenyltetrahydrofolate to 10-formyltetrahydrofolate. This is Bifunctional protein FolD from Rhodopseudomonas palustris (strain HaA2).